Reading from the N-terminus, the 341-residue chain is Queuosine 5'-phosphate N-glycosylase/hydrolase (341 aa).

Met1 is subject to N-acetylmethionine. Residues His53, Phe237, Asp239, Asp314, Tyr315, and Asp319 each coordinate queuine. The Nucleophile or transition state stabilizer role is filled by Asp239.

It belongs to the QNG1 protein family.

The catalysed reaction is queuosine 5'-phosphate + H2O = queuine + D-ribose 5-phosphate. Its function is as follows. Catalyzes the hydrolysis of queuosine 5'-phosphate, releasing the nucleobase queuine (q). Is required for salvage of queuine from exogenous queuosine (Q) that is imported and then converted to queuosine 5'-phosphate intracellularly. In Bos taurus (Bovine), this protein is Queuosine 5'-phosphate N-glycosylase/hydrolase.